The chain runs to 201 residues: Protein OPI10 homolog (201 aa).

This sequence belongs to the OPI10 family.

This Anopheles gambiae (African malaria mosquito) protein is Protein OPI10 homolog.